The following is a 340-amino-acid chain: Holliday junction branch migration complex subunit RuvB (340 aa).

The interval 1-184 (MNENLDPTTK…FGISSRLQYY (184 aa)) is large ATPase domain (RuvB-L). Residues L23, R24, G65, K68, T69, T70, 131 to 133 (EDF), R174, Y184, and R221 each bind ATP. T69 contacts Mg(2+). Positions 185–255 (STELLTTIVE…ISKYALKALN (71 aa)) are small ATPAse domain (RuvB-S). The head domain (RuvB-H) stretch occupies residues 258-340 (AHGLDEMDNK…INTNIQGGLF (83 aa)). Residues R313 and R318 each contribute to the DNA site.

It belongs to the RuvB family. In terms of assembly, homohexamer. Forms an RuvA(8)-RuvB(12)-Holliday junction (HJ) complex. HJ DNA is sandwiched between 2 RuvA tetramers; dsDNA enters through RuvA and exits via RuvB. An RuvB hexamer assembles on each DNA strand where it exits the tetramer. Each RuvB hexamer is contacted by two RuvA subunits (via domain III) on 2 adjacent RuvB subunits; this complex drives branch migration. In the full resolvosome a probable DNA-RuvA(4)-RuvB(12)-RuvC(2) complex forms which resolves the HJ.

The protein localises to the cytoplasm. The catalysed reaction is ATP + H2O = ADP + phosphate + H(+). Its function is as follows. The RuvA-RuvB-RuvC complex processes Holliday junction (HJ) DNA during genetic recombination and DNA repair, while the RuvA-RuvB complex plays an important role in the rescue of blocked DNA replication forks via replication fork reversal (RFR). RuvA specifically binds to HJ cruciform DNA, conferring on it an open structure. The RuvB hexamer acts as an ATP-dependent pump, pulling dsDNA into and through the RuvAB complex. RuvB forms 2 homohexamers on either side of HJ DNA bound by 1 or 2 RuvA tetramers; 4 subunits per hexamer contact DNA at a time. Coordinated motions by a converter formed by DNA-disengaged RuvB subunits stimulates ATP hydrolysis and nucleotide exchange. Immobilization of the converter enables RuvB to convert the ATP-contained energy into a lever motion, pulling 2 nucleotides of DNA out of the RuvA tetramer per ATP hydrolyzed, thus driving DNA branch migration. The RuvB motors rotate together with the DNA substrate, which together with the progressing nucleotide cycle form the mechanistic basis for DNA recombination by continuous HJ branch migration. Branch migration allows RuvC to scan DNA until it finds its consensus sequence, where it cleaves and resolves cruciform DNA. The sequence is that of Holliday junction branch migration complex subunit RuvB from Flavobacterium johnsoniae (strain ATCC 17061 / DSM 2064 / JCM 8514 / BCRC 14874 / CCUG 350202 / NBRC 14942 / NCIMB 11054 / UW101) (Cytophaga johnsonae).